We begin with the raw amino-acid sequence, 183 residues long: Intermembrane phospholipid transport system binding protein MlaD (183 aa).

Topologically, residues M1–E7 are cytoplasmic. The chain crosses the membrane as a helical; Signal-anchor for type II membrane protein span at residues I8–A28. The Periplasmic portion of the chain corresponds to A29 to K183. An MCE/MlaD region spans residues T39–V116. Residues K155–K183 form a disordered region. Residues N172 to K183 show a composition bias toward polar residues.

The protein belongs to the MlaD family. As to quaternary structure, the complex is composed of two ATP-binding proteins (MlaF), two transmembrane proteins (MlaE), two cytoplasmic solute-binding proteins (MlaB) and six periplasmic solute-binding proteins (MlaD).

It is found in the cell inner membrane. Functionally, part of the ABC transporter complex MlaFEDB, which is involved in a phospholipid transport pathway that maintains lipid asymmetry in the outer membrane by retrograde trafficking of phospholipids from the outer membrane to the inner membrane. MlaD functions in substrate binding with strong affinity for phospholipids and modulates ATP hydrolytic activity of the complex. The sequence is that of Intermembrane phospholipid transport system binding protein MlaD from Escherichia coli O157:H7.